The chain runs to 474 residues: 3-isopropylmalate dehydratase large subunit (474 aa).

C350, C411, and C414 together coordinate [4Fe-4S] cluster.

It belongs to the aconitase/IPM isomerase family. LeuC type 1 subfamily. Heterodimer of LeuC and LeuD. The cofactor is [4Fe-4S] cluster.

It catalyses the reaction (2R,3S)-3-isopropylmalate = (2S)-2-isopropylmalate. Its pathway is amino-acid biosynthesis; L-leucine biosynthesis; L-leucine from 3-methyl-2-oxobutanoate: step 2/4. In terms of biological role, catalyzes the isomerization between 2-isopropylmalate and 3-isopropylmalate, via the formation of 2-isopropylmaleate. The polypeptide is 3-isopropylmalate dehydratase large subunit (Hydrogenovibrio crunogenus (strain DSM 25203 / XCL-2) (Thiomicrospira crunogena)).